Here is a 214-residue protein sequence, read N- to C-terminus: MATTRKPRGGAGGATQPALDFDAPGEIVCGVDEAGRGPLAGPVVAAAVVLDPARPIVGLDDSKALSAKKRERLFDEIVAHALAYSVASASVEEIDSLNILHATMLAMKRAVEGLSVLPTLAKIDGNRCPMLAIRSEAIVGGDALVPSISAASILAKVTRDRTLVELHQQFPMYGFDAHAGYGTPQHLAALREHGPCEHHRRSFAPVREAFDLIR.

Positions 26 to 214 constitute an RNase H type-2 domain; it reads EIVCGVDEAG…PVREAFDLIR (189 aa). Aspartate 32, glutamate 33, and aspartate 124 together coordinate a divalent metal cation.

This sequence belongs to the RNase HII family. It depends on Mn(2+) as a cofactor. Mg(2+) is required as a cofactor.

It localises to the cytoplasm. It carries out the reaction Endonucleolytic cleavage to 5'-phosphomonoester.. Its function is as follows. Endonuclease that specifically degrades the RNA of RNA-DNA hybrids. The polypeptide is Ribonuclease HII (Burkholderia pseudomallei (strain 1710b)).